Here is a 163-residue protein sequence, read N- to C-terminus: Phospholipase A2 homolog 3 (163 aa).

Positions 1–43 (MARGGSFSRLRLRAGVVVAAAAAALLLFAVVAPPAAALNIGLQ) are cleaved as a signal peptide. 6 disulfide bridges follow: cysteine 55–cysteine 83, cysteine 59–cysteine 89, cysteine 64–cysteine 137, cysteine 76–cysteine 96, cysteine 95–cysteine 121, and cysteine 102–cysteine 114. Positions 75, 77, and 80 each coordinate Ca(2+). Histidine 99 is a catalytic residue. Aspartate 100 lines the Ca(2+) pocket.

Belongs to the phospholipase A2 family. The cofactor is Ca(2+).

The protein localises to the secreted. It carries out the reaction a 1,2-diacyl-sn-glycero-3-phosphocholine + H2O = a 1-acyl-sn-glycero-3-phosphocholine + a fatty acid + H(+). Inhibited by EGTA. Its function is as follows. PA2 catalyzes the calcium-dependent hydrolysis of the 2-acyl groups in 3-sn-phosphoglycerides. Releases lysophospholipids (LPLs) and free fatty acids (FFAs) from membrane phospholipids in response to hormones and other external stimuli. This is Phospholipase A2 homolog 3 (PLA2-III) from Oryza sativa subsp. japonica (Rice).